The sequence spans 132 residues: Phosphoribosyl-AMP cyclohydrolase (132 aa).

A Mg(2+)-binding site is contributed by Asp86. Cys87 is a binding site for Zn(2+). Positions 88 and 90 each coordinate Mg(2+). Zn(2+)-binding residues include Cys103 and Cys110.

Belongs to the PRA-CH family. As to quaternary structure, homodimer. The cofactor is Mg(2+). Zn(2+) is required as a cofactor.

It localises to the cytoplasm. It catalyses the reaction 1-(5-phospho-beta-D-ribosyl)-5'-AMP + H2O = 1-(5-phospho-beta-D-ribosyl)-5-[(5-phospho-beta-D-ribosylamino)methylideneamino]imidazole-4-carboxamide. It functions in the pathway amino-acid biosynthesis; L-histidine biosynthesis; L-histidine from 5-phospho-alpha-D-ribose 1-diphosphate: step 3/9. Its function is as follows. Catalyzes the hydrolysis of the adenine ring of phosphoribosyl-AMP. This chain is Phosphoribosyl-AMP cyclohydrolase, found in Clavibacter michiganensis subsp. michiganensis (strain NCPPB 382).